A 260-amino-acid polypeptide reads, in one-letter code: HTH-type transcriptional activator FapR (260 aa).

The HTH araC/xylS-type domain maps to Glu154–Gly251. 2 consecutive DNA-binding regions (H-T-H motif) follow at residues Ser171 to Cys192 and Ile218 to Tyr241.

Homodimer.

Positive regulator of the expression of the 987P operon for the fimbrial protein in enterotoxigenic E.coli. In Escherichia coli, this protein is HTH-type transcriptional activator FapR.